A 189-amino-acid polypeptide reads, in one-letter code: dCTP deaminase (189 aa).

DCTP is bound by residues 112 to 117, 136 to 138, Gln157, Tyr171, and Gln181; these read KSTYAR and TLE. The Proton donor/acceptor role is filled by Glu138.

The protein belongs to the dCTP deaminase family. Homotrimer.

It carries out the reaction dCTP + H2O + H(+) = dUTP + NH4(+). It participates in pyrimidine metabolism; dUMP biosynthesis; dUMP from dCTP (dUTP route): step 1/2. In terms of biological role, catalyzes the deamination of dCTP to dUTP. The protein is dCTP deaminase of Nitrosospira multiformis (strain ATCC 25196 / NCIMB 11849 / C 71).